A 248-amino-acid polypeptide reads, in one-letter code: MESIVNAIITSTNKIFENQARIANNITNISTPGFKSELELKILLPSQKDQNSQEDNFLYKQYKNKNQGTLRRTNQPLDCAIIDKNDWFVIKIDPKTIAYTKNGHFKINSNRQLTVQNHPVLGEDGEIFIPKNENIVISSDGYINIIKNNVLQHKVAQFKLKNFDINDLTYKTNGLYLLNKNNKLNHTNHKNVSNIKLVSGILEDSNVNLEENMVEMISNARKFDMQIKILSMYNENTQAASRFLNLNY.

Belongs to the flagella basal body rod proteins family. As to quaternary structure, the basal body constitutes a major portion of the flagellar organelle and consists of five rings (E,L,P,S, and M) mounted on a central rod. The rod consists of about 26 subunits of FlgG in the distal portion, and FlgB, FlgC and FlgF are thought to build up the proximal portion of the rod with about 6 subunits each.

It localises to the bacterial flagellum basal body. This chain is Flagellar basal-body rod protein FlgF (flgF), found in Buchnera aphidicola subsp. Baizongia pistaciae (strain Bp).